The primary structure comprises 380 residues: Cytochrome b (380 aa).

The next 4 helical transmembrane spans lie at 33 to 53, 77 to 98, 113 to 133, and 178 to 198; these read FGSL…FLAM, WLIR…YLHV, WNIG…GYVL, and FFAF…LHLL. 2 residues coordinate heme b: H83 and H97. Positions 182 and 196 each coordinate heme b. Residue H201 coordinates a ubiquinone. 4 helical membrane passes run 226 to 246, 288 to 308, 320 to 340, and 347 to 367; these read YKDL…ALFS, LGGV…PLLH, LTQI…WIGG, and FITV…IFIP.

The protein belongs to the cytochrome b family. The cytochrome bc1 complex contains 3 respiratory subunits (MT-CYB, CYC1 and UQCRFS1), 2 core proteins (UQCRC1 and UQCRC2) and probably 6 low-molecular weight proteins. It depends on heme b as a cofactor.

It localises to the mitochondrion inner membrane. Functionally, component of the ubiquinol-cytochrome c reductase complex (complex III or cytochrome b-c1 complex) that is part of the mitochondrial respiratory chain. The b-c1 complex mediates electron transfer from ubiquinol to cytochrome c. Contributes to the generation of a proton gradient across the mitochondrial membrane that is then used for ATP synthesis. The protein is Cytochrome b (mt-cyb) of Neocyttus rhomboidalis (Spiky oreo dory).